The following is a 472-amino-acid chain: Glycosyl hydrolase family 109 protein (472 aa).

Residues 1–35 constitute a signal peptide (tat-type signal); sequence MSQTPAVSRRLLLGSAAATGALATGIGSAAPVAAA. Residues 68–69, aspartate 90, 139–142, histidine 145, 159–160, and asparagine 188 contribute to the NAD(+) site; these read NR, WEFH, and EL. Substrate contacts are provided by residues tyrosine 217, arginine 236, 248-251, and tyrosine 330; that span reads YPMH. Tyrosine 248 is an NAD(+) binding site.

It belongs to the Gfo/Idh/MocA family. Glycosyl hydrolase 109 subfamily. The cofactor is NAD(+). Predicted to be exported by the Tat system. The position of the signal peptide cleavage has not been experimentally proven.

In terms of biological role, glycosidase. Has no alpha-N-acetylgalactosaminidase activity. This is Glycosyl hydrolase family 109 protein from Streptomyces coelicolor (strain ATCC BAA-471 / A3(2) / M145).